Reading from the N-terminus, the 497-residue chain is Glycerol kinase (497 aa).

T12 is an ADP binding site. ATP-binding residues include T12, T13, and S14. T12 is a sn-glycerol 3-phosphate binding site. Residue R16 coordinates ADP. Residues R82, E83, Y134, and D243 each contribute to the sn-glycerol 3-phosphate site. Residues R82, E83, Y134, D243, and Q244 each contribute to the glycerol site. Positions 265 and 308 each coordinate ADP. Residues T265, G308, Q312, and G411 each contribute to the ATP site. Position 411 (G411) interacts with ADP.

The protein belongs to the FGGY kinase family.

It catalyses the reaction glycerol + ATP = sn-glycerol 3-phosphate + ADP + H(+). It participates in polyol metabolism; glycerol degradation via glycerol kinase pathway; sn-glycerol 3-phosphate from glycerol: step 1/1. Inhibited by fructose 1,6-bisphosphate (FBP). Its function is as follows. Key enzyme in the regulation of glycerol uptake and metabolism. Catalyzes the phosphorylation of glycerol to yield sn-glycerol 3-phosphate. This Sinorhizobium fredii (strain NBRC 101917 / NGR234) protein is Glycerol kinase.